A 177-amino-acid chain; its full sequence is uncharacterized protein (177 aa).

A signal peptide spans Met1–Ala22. 3 helical membrane-spanning segments follow: residues Val31 to Phe51, Ile94 to Val114, and Leu136 to Ile156.

The protein resides in the membrane. This is an uncharacterized protein from Saccharomyces cerevisiae (strain ATCC 204508 / S288c) (Baker's yeast).